A 213-amino-acid polypeptide reads, in one-letter code: 3-oxoadipate CoA-transferase subunit B (213 aa).

Residue Glu-50 is part of the active site.

It belongs to the 3-oxoacid CoA-transferase subunit B family. In terms of assembly, heterodimer.

The catalysed reaction is 3-oxoadipate + succinyl-CoA = 3-oxoadipyl-CoA + succinate. It functions in the pathway aromatic compound metabolism; beta-ketoadipate pathway; acetyl-CoA and succinyl-CoA from 3-oxoadipate: step 1/2. In Pseudomonas putida (strain ATCC 47054 / DSM 6125 / CFBP 8728 / NCIMB 11950 / KT2440), this protein is 3-oxoadipate CoA-transferase subunit B (pcaJ).